A 54-amino-acid polypeptide reads, in one-letter code: Conotoxin Cal6.17 (54 aa).

Residues 1–19 (MSGTGVLLLTLLLLVTMAT) form the signal peptide. Cystine bridges form between cysteine 24/cysteine 39, cysteine 32/cysteine 49, and cysteine 38/cysteine 53.

As to expression, expressed by the venom duct.

It is found in the secreted. Probable neurotoxin. The protein is Conotoxin Cal6.17 of Californiconus californicus (California cone).